The sequence spans 373 residues: SAM domain-containing protein SAMSN-1 (373 aa).

The interval 1 to 72 (MLKRKPSNVS…GGGLGKKMRA (72 aa)) is disordered. The Important for interaction with 14-3-3 proteins motif lies at 20-25 (RSSSFG). A phosphoserine mark is found at S23 and S34. Positions 37 to 48 (KPDDSTEAHEGD) are enriched in basic and acidic residues. Over residues 50 to 61 (TNGSGEQSKTSN) the composition is skewed to polar residues. Residue S74 is modified to Phosphoserine. T76 carries the post-translational modification Phosphothreonine. Phosphoserine occurs at positions 90 and 119. Positions 91 to 153 (EEKDEEDGEN…DGTSNRDSFR (63 aa)) are disordered. The span at 123–146 (SDSMDSLYSGQSSSSGITSCSDGT) shows a compositional bias: low complexity. Y160 is modified (phosphotyrosine). Residues 163–224 (PFCGRARVHT…KFIYVDVISE (62 aa)) form the SH3 domain. An SAM domain is found at 241 to 305 (KKSKTLQEFL…LSAAENFLEE (65 aa)). Positions 337 to 359 (DSGCYISSGNSDNGKEDLESENL) are disordered.

Interacts with FASLG. Interacts with phosphotyrosine containing proteins. Interacts (via SH3 domain) with CTTN. Interacts (phosphorylated at Ser-23) with YWHAB, YWHAE, YWHAG, YWHAH, YWHAZ and SFN. Interacts directly with SAP30 and HDAC1. Identified in a complex with SAP30 and HDAC1. In terms of tissue distribution, detected in peripheral blood B-cells (at protein level). Detected in spleen, liver and peripheral blood.

It is found in the nucleus. The protein resides in the cytoplasm. It localises to the cell projection. Its subcellular location is the ruffle. Functionally, negative regulator of B-cell activation. Down-regulates cell proliferation (in vitro). Promotes RAC1-dependent membrane ruffle formation and reorganization of the actin cytoskeleton. Regulates cell spreading and cell polarization. Stimulates HDAC1 activity. Regulates LYN activity by modulating its tyrosine phosphorylation. This Homo sapiens (Human) protein is SAM domain-containing protein SAMSN-1 (SAMSN1).